We begin with the raw amino-acid sequence, 474 residues long: PRAME family member 13 (474 aa).

An LRR 1; degenerate repeat occupies 97 to 124; that stretch reads RRKLQVLDLRDVDENFWARWPGAWALSC. An LRR 2; degenerate repeat occupies 179 to 203; it reads HLCCSKLVNYLTPIKHLRKSLKIIY. One copy of the LRR 3; degenerate repeat lies at 204–230; sequence LNSIQELEIHNMSWPRLIRKLRCYLKE. Residues 231–265 form an LRR 4; degenerate repeat; the sequence is MKTLGKLVFSRCHHSTSDNELEGRLVTKFSSVFLG. LRR repeat units lie at residues 266–291, 292–323, 324–342, 348–375, and 376–400; these read LEHLQLLKIKLITFFSGHLEQLIRCL, QNPLENLELTYGYLLEEDVKCLSQYPSLGYLK, HLNLSYVLLFRISLEPLGA, AASLETLILEGCQIHYSQLSAILPGLSR, and CSQLTTFYFGRNCMSMGALKDLLRH.

This sequence belongs to the PRAME family.

The protein is PRAME family member 13 of Homo sapiens (Human).